The primary structure comprises 549 residues: Teichoic acids export ATP-binding protein TagH (549 aa).

Positions 22–243 (DKLKDLFRKQ…YRAFLKEYNQ (222 aa)) constitute an ABC transporter domain. Residue 57–64 (GLNGSGKS) participates in ATP binding. The tract at residues 244–549 (MSMEDRKKFQ…EIQSISIVKK (306 aa)) is unknown. An SH3b domain is found at 346-415 (ENMYMVKSNG…VSTKFIEPFK (70 aa)).

This sequence belongs to the ABC transporter superfamily. Teichoic acids exporter (TC 3.A.1.104.1) family. As to quaternary structure, the complex is composed of two ATP-binding proteins (TagH) and two transmembrane proteins (TagG).

The protein localises to the cell membrane. The catalysed reaction is ATP + H2O + teichoic acidSide 1 = ADP + phosphate + teichoic acidSide 2.. Part of the ABC transporter complex TagGH involved in teichoic acids export. Responsible for energy coupling to the transport system. The polypeptide is Teichoic acids export ATP-binding protein TagH (Bacillus cereus (strain ZK / E33L)).